We begin with the raw amino-acid sequence, 516 residues long: Coiled-coil domain-containing protein 82 (516 aa).

Basic residues predominate over residues 1 to 13 (MVHARRHETRKNS). The disordered stretch occupies residues 1–265 (MVHARRHETR…DYGDAENEDD (265 aa)). A compositionally biased stretch (acidic residues) spans 38–62 (DSDEELDSDEEIGSDEDLDGGESID). Positions 78–96 (IPEKETELNLIKVESERSN) are enriched in basic and acidic residues. The span at 98–107 (KCHMNTSSSS) shows a compositional bias: polar residues. Residues 113-135 (MNKTKHNDLPDDEAHPGQAEGHH) are compositionally biased toward basic and acidic residues. A phosphoserine mark is found at serine 170 and serine 194. Threonine 202 bears the Phosphothreonine mark. A coiled-coil region spans residues 204 to 232 (EKSPAARKREYHQKLQELCERSRQKQRHN). Residues 215 to 226 (HQKLQELCERSR) show a composition bias toward basic and acidic residues. Acidic residues predominate over residues 248–265 (TDEDEDDDDYGDAENEDD). At serine 301 the chain carries Phosphoserine.

The polypeptide is Coiled-coil domain-containing protein 82 (Ccdc82) (Rattus norvegicus (Rat)).